Reading from the N-terminus, the 282-residue chain is Pantothenate synthetase (282 aa).

30–37 (MGYFHEGH) contributes to the ATP binding site. Residue His37 is the Proton donor of the active site. Gln61 lines the (R)-pantoate pocket. Beta-alanine is bound at residue Gln61. Residue 147–150 (GQKD) participates in ATP binding. Residue Gln153 coordinates (R)-pantoate. ATP-binding positions include Val176 and 184–187 (LSSR).

This sequence belongs to the pantothenate synthetase family. Homodimer.

It is found in the cytoplasm. It carries out the reaction (R)-pantoate + beta-alanine + ATP = (R)-pantothenate + AMP + diphosphate + H(+). Its pathway is cofactor biosynthesis; (R)-pantothenate biosynthesis; (R)-pantothenate from (R)-pantoate and beta-alanine: step 1/1. Its function is as follows. Catalyzes the condensation of pantoate with beta-alanine in an ATP-dependent reaction via a pantoyl-adenylate intermediate. This chain is Pantothenate synthetase, found in Maridesulfovibrio salexigens (strain ATCC 14822 / DSM 2638 / NCIMB 8403 / VKM B-1763) (Desulfovibrio salexigens).